A 385-amino-acid chain; its full sequence is Alanine--glyoxylate aminotransferase 1 (385 aa).

K201 is modified (N6-(pyridoxal phosphate)lysine). R354 lines the substrate pocket.

The protein belongs to the class-V pyridoxal-phosphate-dependent aminotransferase family. In terms of assembly, homodimer. The cofactor is pyridoxal 5'-phosphate.

It catalyses the reaction glyoxylate + L-alanine = glycine + pyruvate. Its pathway is amino-acid biosynthesis; glycine biosynthesis; glycine from glyoxylate: step 1/1. Has alanine:glyoxylate aminotransferase activity. The polypeptide is Alanine--glyoxylate aminotransferase 1 (Saccharomyces cerevisiae (strain ATCC 204508 / S288c) (Baker's yeast)).